The primary structure comprises 482 residues: Transcription termination/antitermination protein NusA (482 aa).

An S1 motif domain is found at 133 to 197; it reads NKVVIGYVQQ…NGIEVILSRT (65 aa). The KH domain maps to 300–446; the sequence is LHKALVVVSD…NDNDESMEKV (147 aa).

It belongs to the NusA family. Monomer. Binds directly to the core enzyme of the DNA-dependent RNA polymerase and to nascent RNA.

The protein localises to the cytoplasm. In terms of biological role, participates in both transcription termination and antitermination. The chain is Transcription termination/antitermination protein NusA from Borreliella burgdorferi (strain ATCC 35210 / DSM 4680 / CIP 102532 / B31) (Borrelia burgdorferi).